A 795-amino-acid chain; its full sequence is Levansucrase (795 aa).

The first 36 residues, 1–36 (METKVRKKMYKKGKFWVVATITTAMLTGIGLSSVQA), serve as a signal peptide directing secretion. Polar residues-rich tracts occupy residues 42-66 (TQVSSELAERSQVQENTTASSSAAE) and 112-130 (QAATVTKTSASTPEVGQTN). Disordered regions lie at residues 42 to 83 (TQVS…NPAA) and 103 to 138 (ESKASKTKDQAATVTKTSASTPEVGQTNEKAKATKE). The sucrose site is built by W245, D246, and S315. The Nucleophile role is filled by D246. D394 contributes to the Ca(2+) binding site. 2 residues coordinate sucrose: R399 and D400. Ca(2+) contacts are provided by Q425, N464, and D496. E497 lines the sucrose pocket. The Proton donor/acceptor role is filled by E499. R517 contacts sucrose. Residues 774–794 (GNSFFAALLALFSAFCVSIGF) form a helical membrane-spanning segment.

Belongs to the glycosyl hydrolase 68 family.

Its subcellular location is the cell membrane. The protein resides in the cell surface. The enzyme catalyses [6)-beta-D-fructofuranosyl-(2-&gt;](n) alpha-D-glucopyranoside + sucrose = [6)-beta-D-fructofuranosyl-(2-&gt;](n+1) alpha-D-glucopyranoside + D-glucose. Ca(2+) may play an important structural role and promote stability of levansucrase. Its function is as follows. Catalyzes the synthesis of levan, a fructose polymer, by transferring the fructosyl moiety from sucrose to a growing acceptor molecule. Also displays sucrose hydrolase activity. This Streptococcus mutans serotype c (strain ATCC 700610 / UA159) protein is Levansucrase.